The following is a 2477-amino-acid chain: Non-reducing polyketide synthase mapC (2477 aa).

Residues 14 to 269 (LLFGPQCSEI…HQQTHREGIQ (256 aa)) are N-terminal acylcarrier protein transacylase domain (SAT). Positions 403–820 (MPPIAITGMA…GSNAALIVRD (418 aa)) constitute a Ketosynthase family 3 (KS3) domain. Catalysis depends on for beta-ketoacyl synthase activity residues C568, H703, and H742. Residues 930–1233 (LCFGGQNGVT…HRVNLDGSDG (304 aa)) form a malonyl-CoA:ACP transacylase (MAT) domain region. The active-site For acyl/malonyl transferase activity is S1017. The segment at 1302 to 1435 (QERAGLLRKL…GSVSLCNERS (134 aa)) is N-terminal hotdog fold. In terms of domain architecture, PKS/mFAS DH spans 1302–1612 (QERAGLLRKL…FMSVSIRSLT (311 aa)). The tract at residues 1307-1611 (LLRKLSDGPE…RFMSVSIRSL (305 aa)) is product template (PT) domain. H1336 serves as the catalytic Proton acceptor; for dehydratase activity. The interval 1461–1612 (ASNGLKGSTV…FMSVSIRSLT (152 aa)) is C-terminal hotdog fold. Residue D1518 is the Proton donor; for dehydratase activity of the active site. Residues 1651–1725 (DSDLVAVQEM…GLTEHIFPGH (75 aa)) enclose the Carrier domain. Position 1685 is an O-(pantetheine 4'-phosphoryl)serine (S1685). The interval 1882–2117 (PYALEHDLLQ…GFEWVGWTNN (236 aa)) is methyltransferase (CMeT) domain. Active-site for thioesterase activity residues include S2267 and D2421.

Its subcellular location is the cytoplasm. The protein resides in the cytosol. The catalysed reaction is 3 malonyl-CoA + acetyl-CoA + S-adenosyl-L-methionine + H(+) = 5-methylorsellinate + S-adenosyl-L-homocysteine + 3 CO2 + 4 CoA. It participates in secondary metabolite biosynthesis; terpenoid biosynthesis. In terms of biological role, non-reducing polyketide synthase; part of the gene cluster that mediates the biosynthesis of mycophenolic acid (MPA), the first isolated antibiotic natural product in the world obtained from a culture of Penicillium brevicompactum in 1893. MpaC catalyzes the synthesis of 5-methylorsellinic acid (5MOA) via the condensation of 1 acetyl-CoA starter unit with 3 malonyl-CoA units and one methylation step. The first step of the pathway is the synthesis of 5-methylorsellinic acid (5MOA) by the cytosolic polyketide synthase mpaC. 5MOA is then converted to the phthalide compound 5,7-dihydroxy-4,6-dimethylphthalide (DHMP) by the endoplasmic reticulum-bound cytochrome P450 monooxygenase mpaDE. MpaDE first catalyzes hydroxylation of 5-MOA to 4,6-dihydroxy-2-(hydroxymethyl)-3-methylbenzoic acid (DHMB). MpaDE then acts as a lactone synthase that catalyzes the ring closure to convert DHMB into DHMP. The next step is the prenylation of DHMP by the Golgi apparatus-associated prenyltransferase mpaA to yield farnesyl-DHMP (FDHMP). The ER-bound oxygenase mpaB then mediates the oxidative cleavage the C19-C20 double bond in FDHMP to yield FDHMP-3C via a mycophenolic aldehyde intermediate. The O-methyltransferase mpaG catalyzes the methylation of FDHMP-3C to yield MFDHMP-3C. After the cytosolic methylation of FDHMP-3C, MFDHMP-3C enters into peroxisomes probably via free diffusion due to its low molecular weight. Upon a peroxisomal CoA ligation reaction, catalyzed by a beta-oxidation component enzyme acyl-CoA ligase ACL891, MFDHMP-3C-CoA would then be restricted to peroxisomes for the following beta-oxidation pathway steps. The peroxisomal beta-oxidation machinery than converts MFDHMP-3C-CoA into MPA_CoA, via a beta-oxidation chain-shortening process. Finally mpaH acts as a peroxisomal acyl-CoA hydrolase with high substrate specificity toward MPA-CoA to release the final product MPA. The protein is Non-reducing polyketide synthase mapC of Penicillium roqueforti (strain FM164).